The chain runs to 383 residues: Micronemal protein 3 (383 aa).

A signal peptide spans Met1–Ala26. Residues Leu27–Gln66 constitute a propeptide, required for proper sorting to micronemes. The tract at residues Ser67–Cys145 is lectin-like; required for the binding of host cells. Required for proper sorting to micronemes regions lie at residues Ser146 to Pro189, Cys190 to Gly236, and Cys237 to Lys290. The 42-residue stretch at Ser186–Glu227 folds into the EGF-like domain. Disulfide bonds link Cys190–Cys204 and Cys198–Cys214. Residue Asn201 is glycosylated (N-linked (GlcNAc...) asparagine). The involved in dimerization stretch occupies residues Glu294–His359.

As to quaternary structure, homodimer; dimerization is likely required for host cell binding but not for trafficking to micronemes. Removal of the propeptide occurs in a post-medial-Golgi compartment. Removal of the propeptide is required for the host cell binding. The presence of propeptide does not affect dimerization. The presence of propeptide does not affect sorting to micronemes.

Its subcellular location is the cytoplasmic vesicle. It localises to the secretory vesicle. The protein localises to the microneme. The protein resides in the secreted. It is found in the golgi apparatus. Its subcellular location is the endoplasmic reticulum. Functionally, adhesin; can bind both the host cells and the parasites. May be involved in parasite invasion by acting as a bridge between the parasite and the host cell. Triggers innate immune responses in mouse macrophages via the TLR11/MyD88/NF-kappa-B pathway. Induces TNF/TNF-alpha secretion in mouse macrophages. Induces secretion of IL6 in mouse and human macrophages likely via different mechanisms. Up-regulates expression of NOS2/iNOS in mouse macrophages. Induces mouse macrophage polarization. This is Micronemal protein 3 from Toxoplasma gondii.